Here is a 268-residue protein sequence, read N- to C-terminus: Tryptophan synthase alpha chain (268 aa).

Residues glutamate 49 and aspartate 60 each act as proton acceptor in the active site.

Belongs to the TrpA family. Tetramer of two alpha and two beta chains.

The enzyme catalyses (1S,2R)-1-C-(indol-3-yl)glycerol 3-phosphate + L-serine = D-glyceraldehyde 3-phosphate + L-tryptophan + H2O. It functions in the pathway amino-acid biosynthesis; L-tryptophan biosynthesis; L-tryptophan from chorismate: step 5/5. In terms of biological role, the alpha subunit is responsible for the aldol cleavage of indoleglycerol phosphate to indole and glyceraldehyde 3-phosphate. In Escherichia coli (strain SE11), this protein is Tryptophan synthase alpha chain.